The following is a 188-amino-acid chain: Calcium load-activated calcium channel (188 aa).

At 1–4 the chain is on the lumenal side; the sequence is MSTM. The helical transmembrane segment at 5-32 threads the bilayer; it reads FADTILIVFISICTALLAEGITWVLVYR. A coiled-coil region spans residues 32–89; it reads RTDKYKRLKAEVEKQSKKLEKKKETITESAGRQQKKKIERQEEKLKNNNRDLSMVRMK. Residues 33–86 lie on the Cytoplasmic side of the membrane; it reads TDKYKRLKAEVEKQSKKLEKKKETITESAGRQQKKKIERQEEKLKNNNRDLSMV. A helical transmembrane segment spans residues 87–106; that stretch reads RMKSMFAIGFCFTALMGMFN. Residues 107 to 120 lie on the Lumenal side of the membrane; it reads SIFDGRVVAKLPFV. An intramembrane segment occupies 121 to 130; the sequence is PLSYIQGLSH. Topologically, residues 131-140 are lumenal; that stretch reads RNLLGEDYTD. A helical membrane pass occupies residues 141–162; the sequence is CSFIFLYILCTMSIRQNIQKML. At 163 to 188 the chain is on the cytoplasmic side; the sequence is GLAPSRAATKQAGGFLGPPPQAAKFS.

This sequence belongs to the TMCO1 family. Homodimer and homotetramer. Component of the multi-pass translocon (MPT) complex.

It is found in the endoplasmic reticulum membrane. The protein localises to the golgi apparatus membrane. Its function is as follows. Calcium-selective channel required to prevent calcium stores from overfilling, thereby playing a key role in calcium homeostasis. In response to endoplasmic reticulum (ER) overloading, assembles into a homotetramer, forming a functional calcium-selective channel, regulating the calcium content in endoplasmic reticulum store. Component of the multi-pass translocon (MPT) complex that mediates insertion of multi-pass membrane proteins into the lipid bilayer of membranes. This is Calcium load-activated calcium channel from Danio rerio (Zebrafish).